The sequence spans 239 residues: 1-(5-phosphoribosyl)-5-[(5-phosphoribosylamino)methylideneamino] imidazole-4-carboxamide isomerase (239 aa).

The active-site Proton acceptor is the Asp8. Catalysis depends on Asp129, which acts as the Proton donor.

This sequence belongs to the HisA/HisF family.

Its subcellular location is the cytoplasm. The enzyme catalyses 1-(5-phospho-beta-D-ribosyl)-5-[(5-phospho-beta-D-ribosylamino)methylideneamino]imidazole-4-carboxamide = 5-[(5-phospho-1-deoxy-D-ribulos-1-ylimino)methylamino]-1-(5-phospho-beta-D-ribosyl)imidazole-4-carboxamide. It participates in amino-acid biosynthesis; L-histidine biosynthesis; L-histidine from 5-phospho-alpha-D-ribose 1-diphosphate: step 4/9. This Cereibacter sphaeroides (strain ATCC 17025 / ATH 2.4.3) (Rhodobacter sphaeroides) protein is 1-(5-phosphoribosyl)-5-[(5-phosphoribosylamino)methylideneamino] imidazole-4-carboxamide isomerase.